Consider the following 112-residue polypeptide: Integration host factor subunit alpha (112 aa).

The protein belongs to the bacterial histone-like protein family. In terms of assembly, heterodimer of an alpha and a beta chain.

This protein is one of the two subunits of integration host factor, a specific DNA-binding protein that functions in genetic recombination as well as in transcriptional and translational control. The polypeptide is Integration host factor subunit alpha (Agrobacterium fabrum (strain C58 / ATCC 33970) (Agrobacterium tumefaciens (strain C58))).